The chain runs to 514 residues: MTHTATEPGTSLPLRHRSIAIGAGSLAVLLGALDTYVVVSVITDIMTSVGIALNNIQQVTPIVTGYLLGYIAAMPLLGQASDRFGRRLILQLALAGFAIGSVITALSTDLTMLVSGRVIQGVASGALLPVTLALGADLWSQRNRATVLGGIGAAQELGSVLGPLYGVLCVWLFGSWTAIFWVNVPLAIIAIVLVQFSVPAHQHDPDRPKVDVVGGALLAVALGLLVVGLYSPDPKVSALPEWALPVLSGSGVAFLAFILWESRAKTRLIKPEGVRFGPFFAALAASLAAGAALMVTLVNIELLGQGVLQMDKADAVFLLSRFLVALPIGAVIGGWLATRFGDRIIAVIGMLIAAFGYYLISGWPVDVLAAVHNFGFFTLPRLDTDLVVAGIGLGLVIGPLSSAALRVVPAAQHGIASALVVVARMTGMLIGMAALGGWGIHRFYQNFDALAAKEPKPTGKPNLLELQQQLLNRSITAYSEMYSEMFAITAVVCVIAAVIAIFVGSHRKSGHEAQ.

Helical transmembrane passes span 19 to 39, 58 to 78, 88 to 108, 118 to 138, 157 to 177, 178 to 198, 210 to 230, 239 to 259, 278 to 298, 316 to 336, and 344 to 364; these read IAIG…YVVV, QVTP…PLLG, LILQ…ALST, VIQG…GADL, LGSV…GSWT, AIFW…QFSV, VDVV…VGLY, LPEW…AFIL, PFFA…VTLV, VFLL…GGWL, and IIAV…SGWP. The interval 371 to 380 is beta-hairpin; the sequence is VHNFGFFTLP. The next 3 helical transmembrane spans lie at 385-405, 420-440, and 485-505; these read DLVV…SAAL, VVVA…GWGI, and MFAI…FVGS.

The protein belongs to the major facilitator superfamily. P55 (TC 2.A.1.3.34) family.

It is found in the cell inner membrane. Functionally, in association with lipoprotein LprG probably transports triacyglycerides (TAG) across the inner cell membrane into the periplasm; TAG probably regulates lipid metabolism and growth regulation and plays a structural role in the outer membrane. TAG (and maybe other lipids) enters the central cavity of the P55 transporter from within the cell inner membrane via clefts on the cytoplasmic face of P55 between TM5-TM8 and TM2-TM11. From there the lipid is probably transferred to the hydrophobic cavity of LprG. Involved in drug susceptibilty, its expression partially complements the antibiotic susceptibilty of a double lprG-mfs deletion. Probably does not function as a bona fide drug efflux pump, but instead plays a role in outer membrane biogenesis. Probably required with LprG for normal surface localization of lipoarabinomannan (LAM). This chain is Triacylglyceride transporter MAB_2807, found in Mycobacteroides abscessus (strain ATCC 19977 / DSM 44196 / CCUG 20993 / CIP 104536 / JCM 13569 / NCTC 13031 / TMC 1543 / L948) (Mycobacterium abscessus).